Consider the following 146-residue polypeptide: Aspartate carbamoyltransferase regulatory chain (146 aa).

Positions 102, 107, 131, and 134 each coordinate Zn(2+).

This sequence belongs to the PyrI family. Contains catalytic and regulatory chains. It depends on Zn(2+) as a cofactor.

Its function is as follows. Involved in allosteric regulation of aspartate carbamoyltransferase. This Clostridium acetobutylicum (strain ATCC 824 / DSM 792 / JCM 1419 / IAM 19013 / LMG 5710 / NBRC 13948 / NRRL B-527 / VKM B-1787 / 2291 / W) protein is Aspartate carbamoyltransferase regulatory chain.